An 87-amino-acid chain; its full sequence is Chaperone NapD (87 aa).

Belongs to the NapD family. Interacts with the cytoplasmic NapA precursor.

The protein resides in the cytoplasm. In terms of biological role, chaperone for NapA, the catalytic subunit of the periplasmic nitrate reductase. It binds directly and specifically to the twin-arginine signal peptide of NapA, preventing premature interaction with the Tat translocase and premature export. The chain is Chaperone NapD from Escherichia coli O157:H7.